Consider the following 1363-residue polypeptide: Insulin-like peptide receptor (1363 aa).

Positions 1–29 are cleaved as a signal peptide; sequence MRVVDKMAGLMWAALTLVIGLGLLVPSNG. N-linked (GlcNAc...) asparagine glycans are attached at residues N51, N97, N137, N278, N483, N599, N617, N665, N666, N711, N732, N736, N743, N816, N885, and N898. Fibronectin type-III domains are found at residues 473–586 and 590–680; these read SFSR…TDAD and HPQD…CPKS. Fibronectin type-III domains follow at residues 712 to 804 and 813 to 912; these read ETRA…LART and IPGN…VEEE. Residues 721–928 are Extracellular-facing; it reads ELPVTARPFY…QDPQQQVPVS (208 aa). Positions 739–759 are disordered; that stretch reads LPSTNRTVPPTPTPNPNPQLE. The helical transmembrane segment at 929 to 949 threads the bilayer; it reads LMIGMGVGFSLLLILAVIFGI. Topologically, residues 950–1363 are cytoplasmic; it reads WYCTKKRFGD…NLRIPKSTLC (414 aa). Residues 994-1283 form the Protein kinase domain; the sequence is ITLIRELGQG…EIVEILSPEL (290 aa). Residues 1000–1008 and K1028 contribute to the ATP site; that span reads LGQGSFGMV. The interval 1091 to 1117 is disordered; it reads PEEDVGLSDSPASNEAKNSPFAENDND. The active-site Proton acceptor is the D1148. Phosphotyrosine; by autocatalysis is present on Y1174. The interval 1316 to 1363 is disordered; that stretch reads DTETEMYPSGSEFSSTPSPPSETPYSHMNGSHPQNGSMNLRIPKSTLC. Residues 1322-1331 show a composition bias toward low complexity; that stretch reads YPSGSEFSST. Residues 1343-1353 show a composition bias toward polar residues; the sequence is MNGSHPQNGSM.

The protein belongs to the protein kinase superfamily. Tyr protein kinase family. Insulin receptor subfamily. Probable tetramer of 2 alpha and 2 beta chains linked by disulfide bonds. The alpha chains contribute to the formation of the ligand-binding domain, while the beta chains carry the kinase domain. Mn(2+) is required as a cofactor.

Its subcellular location is the membrane. It catalyses the reaction L-tyrosyl-[protein] + ATP = O-phospho-L-tyrosyl-[protein] + ADP + H(+). Functionally, this receptor binds to the insulin related peptide and has a tyrosine-protein kinase activity. The protein is Insulin-like peptide receptor of Branchiostoma lanceolatum (Common lancelet).